We begin with the raw amino-acid sequence, 201 residues long: Recombination protein RecR (201 aa).

A C4-type zinc finger spans residues 57–72 (CRDCRTFTEQEVCTIC). In terms of domain architecture, Toprim spans 81–176 (GQICVVESPA…LASRIAHGVP (96 aa)).

This sequence belongs to the RecR family.

Functionally, may play a role in DNA repair. It seems to be involved in an RecBC-independent recombinational process of DNA repair. It may act with RecF and RecO. The sequence is that of Recombination protein RecR from Edwardsiella ictaluri (strain 93-146).